We begin with the raw amino-acid sequence, 97 residues long: Anti-sigma-YlaC factor YlaD (97 aa).

Zn(2+)-binding residues include H29, C33, and C36. Residues 71-93 form a helical membrane-spanning segment; sequence YYGLLIMKAACWFGAAVAMMLII.

The protein belongs to the zinc-associated anti-sigma factor (ZAS) superfamily. It depends on Zn(2+) as a cofactor.

The protein localises to the cell membrane. In terms of biological role, anti-sigma factor for YlaC. The polypeptide is Anti-sigma-YlaC factor YlaD (ylaD) (Bacillus subtilis (strain 168)).